The primary structure comprises 196 residues: Ribosome maturation factor RimP (196 aa).

Belongs to the RimP family.

It localises to the cytoplasm. Its function is as follows. Required for maturation of 30S ribosomal subunits. The polypeptide is Ribosome maturation factor RimP (Dinoroseobacter shibae (strain DSM 16493 / NCIMB 14021 / DFL 12)).